We begin with the raw amino-acid sequence, 101 residues long: Large ribosomal subunit protein uL24 (101 aa).

It belongs to the universal ribosomal protein uL24 family. In terms of assembly, part of the 50S ribosomal subunit.

One of two assembly initiator proteins, it binds directly to the 5'-end of the 23S rRNA, where it nucleates assembly of the 50S subunit. In terms of biological role, one of the proteins that surrounds the polypeptide exit tunnel on the outside of the subunit. The protein is Large ribosomal subunit protein uL24 of Borrelia hermsii (strain HS1 / DAH).